The chain runs to 441 residues: Capsid protein (441 aa).

A disordered region spans residues 26–63 (DSKKKQPIYQNSSESEESETENKNFIYDFSSEEDFEEP). The short motif at 77–79 (KRK) is the Nuclear localization signal element. The segment at 381-398 (CQCWLCHEEGHYANECPK) adopts a CCHC-type zinc-finger fold.

It belongs to the caulimoviridae capsid protein family. Interacts (via nuclear localization signal) with host importin alpha.

It is found in the virion. The protein resides in the host nucleus. Functionally, self assembles to form an icosahedral capsid, about 50 nm in diameter, nm, composed of 420 subunits of the viral capsid protein. The capsid encapsulates the genomic dsDNA. Following virus entry into host cell, provides nuclear import of the viral genome. Virus particles do not enter the nucleus, but dock at the nuclear membrane through the interaction with host importins. In Soybean chlorotic mottle virus, this protein is Capsid protein.